We begin with the raw amino-acid sequence, 439 residues long: MRLSRYFLPTLKENPAEAQIASHRLMLRAGMVRQTAAGIYAWLPLGLAVLRKIEGIVRDEQKRAGAIELLMPTLQSADLWRQSGRYDAYGPEMLRIVDRHERDMLYGPTNEEMITDIFRGAVRSYRDLPRNLFHIQWKFRDEIRPRFGVMRGREFLMKDGYSFDLDVEGARRAYRKMFVSYLRSFARMGLKAIPMAADTGPIGGDMSHEFIILAETGESAVFCHRDLVDMAVPGDDIDYETDLNPVIAARTDLYAATDEKHDAAKFDAEVPKDKQLSARGIEVGHIFFFGTKYSQSMGALVTGPDGKEVPVQMGSYGIGVSRLVGAIIEASHDDAGIVWPDAVAPFTVGLINLKSGDAETDAACESIYEKLTAQGIDVLYDDTDERAGAKFSNMDLIGLPWQLVIGPRGLKSGTVELKRRATGEKEELSPEAALAKIAG.

It belongs to the class-II aminoacyl-tRNA synthetase family. ProS type 2 subfamily. In terms of assembly, homodimer.

The protein localises to the cytoplasm. It catalyses the reaction tRNA(Pro) + L-proline + ATP = L-prolyl-tRNA(Pro) + AMP + diphosphate. Its function is as follows. Catalyzes the attachment of proline to tRNA(Pro) in a two-step reaction: proline is first activated by ATP to form Pro-AMP and then transferred to the acceptor end of tRNA(Pro). This Parvibaculum lavamentivorans (strain DS-1 / DSM 13023 / NCIMB 13966) protein is Proline--tRNA ligase.